The chain runs to 1066 residues: MNHDFQALALESRGMGELLPTKKFWEPDDSTKDGQKGIFLGDDEWRETAWGTSHHSMSQPIMVQRRSGQSFHGNSEVNAILSPRSESGGLGVSMVEYVLSSSPADKLDSRFRKGTFGTRDAETDGPEKGDQKGKASPFEEDQNRDLKQDDEDSKINGRGLPNGMDADCKDFNRTPGSRQASPTEVVERLGPSTNPPEGLGPLPNPTANKPLVEEFSNPETQNLDAMDQVGLDSLQFDYPGNQVPMDSSGATVGLFDYNSQQQLFQRTSALTVQQLTAAQQQQYALAAAQQPHIAGVFSAGLAPAAFVPNPYIISAAPPGTDPYTAAGLAAAATLAGPAVVPPQYYGVPWGVYPANLFQQQAAAAASNTANQQAASQAQPGQQQVLRPGAGQRPITPSQGQQGQQAESLAAAANPTLAFGQSLAAGMPGYQVLAPTAYYDQTGALVVGPGARTGLGAPVRLMAPTPVLISSTAAQAAAAAAAAGGTANSLTGSTNGLFRPIGTQPPQQQQQQQQPSTNLQSNSFYGSSSLTNSSQSSSLFSHGPGQPGSASLGFGSGSSLGAAIGSALSGFGSSVGSSASSSATRRESLSTSSDLYKRSSSSLAPIGQPFYNSLGFSSSPSPIGMPLPSQTPGHSLTPPPSLSSHGSSSSLHLGGLTNGSGRYISAAPGAEAKYRSASSTSSLFSSSSQLFPPSRLRYNRSDIMPSGRSRLLEDFRNNRFPNLQLRDLIGHIVEFSQDQHGSRFIQQKLERATPAERQIVFNEILQAAYQLMTDVFGNYVIQKFFEFGSLDQKLALATRIRGHVLPLALQMYGCRVIQKALESISSDQQVISEMVKELDGHVLKCVKDQNGNHVVQKCIECVQPQSLQFIIDAFKGQVFVLSTHPYGCRVIQRILEHCTAEQTLPILEELHQHTEQLVQDQYGNYVIQHVLEHGRPEDKSKIVSEIRGKVLALSQHKFASNVVEKCVTHASRAERALLIDEVCCQNDGPHSALYTMMKDQYANYVVQKMIDMAEPAQRKIIMHKIRPHITTLRKYTYGKHILAKLEKYYLKNSPDLGPIGGPPNGML.

The interval 1–260 (MNHDFQALAL…TVGLFDYNSQ (260 aa)) is interaction with SNAPIN. Phosphoserine is present on residues S67, S70, S82, and S102. Disordered stretches follow at residues 106–203 (KLDS…GPLP), 368–408 (TANQ…AESL), and 490–551 (TGST…SASL). Over residues 119 to 133 (RDAETDGPEKGDQKG) the composition is skewed to basic and acidic residues. S136, S177, and S181 each carry phosphoserine. At T183 the chain carries Phosphothreonine. The segment covering 368-383 (TANQQAASQAQPGQQQ) has biased composition (low complexity). Over residues 394–406 (ITPSQGQQGQQAE) the composition is skewed to polar residues. T395 bears the Phosphothreonine mark. The segment covering 503-514 (QPPQQQQQQQQP) has biased composition (low complexity). The span at 515 to 525 (STNLQSNSFYG) shows a compositional bias: polar residues. Low complexity predominate over residues 526 to 540 (SSSLTNSSQSSSLFS). Residues S587 and S592 each carry the phosphoserine modification. The disordered stretch occupies residues 620-650 (SPIGMPLPSQTPGHSLTPPPSLSSHGSSSSL). Positions 630–650 (TPGHSLTPPPSLSSHGSSSSL) are enriched in low complexity. An Omega-N-methylarginine modification is found at R674. A phosphoserine mark is found at S684 and S700. The PUM-HD domain occupies 706–1048 (GRSRLLEDFR…HILAKLEKYY (343 aa)). 8 Pumilio repeats span residues 726 to 761 (DLIG…IVFN), 762 to 797 (EILQ…ALAT), 798 to 835 (RIRG…EMVK), 836 to 871 (ELDG…FIID), 872 to 907 (AFKG…PILE), 908 to 943 (ELHQ…KIVS), 944 to 979 (EIRG…LLID), and 980 to 1022 (EVCC…IIMH). The segment at 741 to 745 (SRFIQ) is adenine-nucleotide binding in RNA target. Residues 777 to 781 (NYVIQ) form a uracil-nucleotide binding in RNA target region. The adenine-nucleotide binding in RNA target stretch occupies residues 813 to 817 (CRVIQ). Positions 851 to 855 (NHVVQ) are non-specific-nucleotide binding in RNA target. Residues 887–891 (CRVIQ) are adenine-nucleotide binding in RNA target. Residues 923–927 (NYVIQ) form a uracil-nucleotide binding in RNA target region. The segment at 959-963 (SNVVE) is guanine-nucleotide binding in RNA target. The segment at 1002–1006 (NYVVQ) is uracil-nucleotide binding in RNA target.

In terms of assembly, homodimer; homodimerizes in vitro. Interacts with DAZ1, DAZL and NANOS1 via its pumilio repeats. Interacts with NANOS3. Interacts with SNAPIN. Recruits the CCR4-POP2-NOT deadenylase leading to translational inhibition and mRNA degradation. Interacts with DDX20. In case of viral infection, interacts with DHX58. In terms of tissue distribution, widely expressed. Expressed in embryonic stem cells, heart, kidney, lung, skin, intestine, spleen and thymus. Expressed at intermediate level in brain and liver. Weakly or not expressed in muscles and stomach. Expressed at various stages of myeloid and lymphoid cell development. In the testis expressed in the spermatogoni, spermatocytes, spermatids and Sertoli cells.

The protein resides in the cytoplasm. The protein localises to the cytoplasmic granule. It is found in the perinuclear region. In terms of biological role, sequence-specific RNA-binding protein that acts as a post-transcriptional repressor by binding the 3'-UTR of mRNA targets. Binds to an RNA consensus sequence, the Pumilio Response Element (PRE), 5'-UGUANAUA-3', that is related to the Nanos Response Element (NRE). Mediates post-transcriptional repression of transcripts via different mechanisms: acts via direct recruitment of the CCR4-POP2-NOT deadenylase leading to translational inhibition and mRNA degradation. Also mediates deadenylation-independent repression by promoting accessibility of miRNAs. Acts as a post-transcriptional repressor of E2F3 mRNAs by binding to its 3'-UTR and facilitating miRNA regulation. Plays a role in cytoplasmic sensing of viral infection. Represses a program of genes necessary to maintain genomic stability such as key mitotic, DNA repair and DNA replication factors. Its ability to repress those target mRNAs is regulated by the lncRNA NORAD (non-coding RNA activated by DNA damage) which, due to its high abundance and multitude of PUMILIO binding sites, is able to sequester a significant fraction of PUM1 and PUM2 in the cytoplasm. May regulate DCUN1D3 mRNA levels. May support proliferation and self-renewal of stem cells. Binds specifically to miRNA MIR199A precursor, with PUM1, regulates miRNA MIR199A expression at a postranscriptional level. The polypeptide is Pumilio homolog 2 (Pum2) (Mus musculus (Mouse)).